We begin with the raw amino-acid sequence, 1551 residues long: Dual oxidase 1 (1551 aa).

An N-terminal signal peptide occupies residues 1–21 (MGFCLALAWTLLVGAWTPLGA). At 22 to 596 (QNPISWEVQR…YFEGSGFGFG (575 aa)) the chain is on the extracellular side. The segment at 26–593 (SWEVQRFDGW…VRDYFEGSGF (568 aa)) is peroxidase-like; mediates peroxidase activity. Asn-94 carries an N-linked (GlcNAc...) asparagine glycan. Residues 150–172 (RWDPETGRSPSNPRDPANQVTGW) are disordered. 4 N-linked (GlcNAc...) asparagine glycosylation sites follow: Asn-342, Asn-354, Asn-461, and Asn-534. The helical transmembrane segment at 597-617 (VTIGTLCCFPLVSLLSAWIVA) threads the bilayer. The Cytoplasmic segment spans residues 618 to 1044 (RLRMRNFKRL…KRFIENYRRH (427 aa)). 3 consecutive EF-hand domains span residues 815–850 (PQDMFVESMFSLADKDGNGYLSFREFLDILVVFMKG), 851–886 (SPEEKSRLMFRMYDFDGNGLISKDEFIRMLRSFIEI), and 895–930 (QLAEVVESMFRESGFQDKEELTWEDFHFMLRDHNSE). Positions 828, 830, 832, 834, 839, 864, 866, 868, and 875 each coordinate Ca(2+). Positions 956-1248 (YISQDMICPS…GSFALIQLPR (293 aa)) are interaction with TXNDC11. The helical transmembrane segment at 1045 to 1065 (IGCVAVFYAIAGGLFLERAYY) threads the bilayer. At 1066–1080 (YAFAAHHTGITDTTR) the chain is on the extracellular side. Residues 1081 to 1101 (VGIILSRGTAASISFMFSYIL) form a helical membrane-spanning segment. The Ferric oxidoreductase domain maps to 1087–1269 (RGTAASISFM…YGGDKLVSLS (183 aa)). The Cytoplasmic segment spans residues 1102 to 1148 (LTMCRNLITFLRETFLNRYVPFDAAVDFHRLIASTAIVLTVLHSVGH). A helical transmembrane segment spans residues 1149 to 1171 (VVNVYLFSISPLSVLSCLFPGLF). Topologically, residues 1172-1188 (HDDGSELPQKYYWWFFQ) are extracellular. Residues 1189-1209 (TVPGLTGVVLLLILAIMYVFA) form a helical membrane-spanning segment. The Cytoplasmic portion of the chain corresponds to 1210-1226 (SHHFRRRSFRGFWLTHH). A helical transmembrane segment spans residues 1227–1247 (LYILLYVLLIIHGSFALIQLP). Position 1248 (Arg-1248) is a topological domain, extracellular. A helical membrane pass occupies residues 1249-1269 (FHIFFLVPAIIYGGDKLVSLS). Residues 1270-1376 (RKKVEISVVK…DGPFGEGHQE (107 aa)) enclose the FAD-binding FR-type domain. Over 1270-1551 (RKKVEISVVK…THFSHHYENF (282 aa)) the chain is Cytoplasmic.

In the N-terminal section; belongs to the peroxidase family. As to quaternary structure, interacts with TXNDC11, TPO and CYBA. N-glycosylated. Expressed in thyrocytes and tracheal surface epithelial cells (at protein level). Expressed in thyroid, trachea, bronchium, and to a lower extent, in placenta, testis, prostate, pancreas and heart.

The protein localises to the apical cell membrane. The enzyme catalyses NADH + O2 + H(+) = H2O2 + NAD(+). It catalyses the reaction NADPH + O2 + H(+) = H2O2 + NADP(+). The protein operates within hormone biosynthesis; thyroid hormone biosynthesis. Its activity is regulated as follows. The NADPH oxidase activity is calcium-dependent. Peroxidase activity is inhibited by aminobenzohydrazide. In terms of biological role, generates hydrogen peroxide which is required for the activity of thyroid peroxidase/TPO and lactoperoxidase/LPO. Plays a role in thyroid hormones synthesis and lactoperoxidase-mediated antimicrobial defense at the surface of mucosa. May have its own peroxidase activity through its N-terminal peroxidase-like domain. The protein is Dual oxidase 1 (DUOX1) of Homo sapiens (Human).